Reading from the N-terminus, the 302-residue chain is Zinc import ATP-binding protein ZnuC (302 aa).

An ABC transporter domain is found at Val13–Arg228. Gly45 to Ser52 is a binding site for ATP.

This sequence belongs to the ABC transporter superfamily. Zinc importer (TC 3.A.1.15.5) family. As to quaternary structure, the complex is composed of two ATP-binding proteins (ZnuC), two transmembrane proteins (ZnuB) and a solute-binding protein (ZnuA).

It is found in the cell inner membrane. It catalyses the reaction Zn(2+)(out) + ATP(in) + H2O(in) = Zn(2+)(in) + ADP(in) + phosphate(in) + H(+)(in). Functionally, part of the ABC transporter complex ZnuABC involved in zinc import. Responsible for energy coupling to the transport system. This is Zinc import ATP-binding protein ZnuC from Rhizobium meliloti (strain 1021) (Ensifer meliloti).